We begin with the raw amino-acid sequence, 142 residues long: Universal stress protein D (142 aa).

The protein belongs to the universal stress protein A family.

The protein resides in the cytoplasm. Functionally, required for resistance to DNA-damaging agents. This chain is Universal stress protein D (uspD), found in Escherichia coli (strain K12).